The following is a 182-amino-acid chain: MGLLSILRKLKSAPDQEVRILLLGLDNAGKTTLLKQLASEDISHITPTQGFNIKSVQSQGFKLNVWDIGGQRKIRPYWKNYFENTDILIYVIDSADRKRFEETGQELAELLEEEKLSCVPVLIFANKQDLLTAAPASEIAEGLNLHTIRDRVWQIQSCSALTGEGVQDGMNWVCKNVNAKKK.

Gly-2 carries the N-myristoyl glycine lipid modification. Position 5 is a phosphoserine (Ser-5). GTP contacts are provided by residues 24–31 (GLDNAGKT), Thr-48, 67–71 (DIGGQ), Gly-70, 126–129 (NKQD), and 159–161 (SAL). Positions 31 and 48 each coordinate Mg(2+).

This sequence belongs to the small GTPase superfamily. Arf family. Found in a complex with ARL3, RP2 and UNC119 (or UNC119B); RP2 induces hydrolysis of GTP ARL3 in the complex, leading to the release of UNC119 (or UNC119B). Interacts with RP2; interaction is direct and stimulated with the activated GTP-bound form of ARL3. Interacts with SYS1. The GTP-bound form interacts with ARL2BP and PDE6D. Microtubule-associated protein. May interact with GOLGA4. Interacts with GGA1; the interaction recruits PKD1:PKD2 complex to trans-Golgi network and is required for ciliary targeting of PKD1:PKD2 complex. Interacts with DNAAF9. In terms of tissue distribution, expressed in the retina. Strongly expressed in connecting cilium, the myoid region of the inner segments (IS) and in cone photoreceptors (at protein level).

The protein resides in the golgi apparatus membrane. The protein localises to the cytoplasm. It localises to the cytoskeleton. It is found in the spindle. Its subcellular location is the nucleus. The protein resides in the microtubule organizing center. The protein localises to the centrosome. It localises to the cell projection. It is found in the cilium. Functionally, small GTP-binding protein which cycles between an inactive GDP-bound and an active GTP-bound form, and the rate of cycling is regulated by guanine nucleotide exchange factors (GEF) and GTPase-activating proteins (GAP). Required for normal cytokinesis and cilia signaling. Requires assistance from GTPase-activating proteins (GAPs) like RP2 and PDE6D, in order to cycle between inactive GDP-bound and active GTP-bound forms. Required for targeting proteins to the cilium, including myristoylated NPHP3 and prenylated INPP5E. Targets NPHP3 to the ciliary membrane by releasing myristoylated NPHP3 from UNC119B cargo adapter into the cilium. Required for PKD1:PKD2 complex targeting from the trans-Golgi network to the cilium. The chain is ADP-ribosylation factor-like protein 3 (ARL3) from Homo sapiens (Human).